Consider the following 396-residue polypeptide: L-aspartate--glyoxylate aminotransferase (396 aa).

An N6-(pyridoxal phosphate)lysine modification is found at K196.

The protein belongs to the class-V pyridoxal-phosphate-dependent aminotransferase family. It depends on pyridoxal 5'-phosphate as a cofactor.

It catalyses the reaction oxaloacetate + glycine = glyoxylate + L-aspartate. Functionally, catalyzes the transamination of glyoxylate into glycine using L-aspartate as the preferred amino group donor. Is essential for the growth of P.denitrificans in the presence of glycolate and glyoxylate since it functions in glyoxylate assimilation via the beta-hydroxyaspartate cycle (BHAC). Can catalyze the reverse reaction in vitro, and also use L-serine and L-glutamate as amino group donor, but with much less efficiency than L-aspartate. The protein is L-aspartate--glyoxylate aminotransferase of Paracoccus denitrificans (strain Pd 1222).